The chain runs to 453 residues: MATTLLQTSSSTFGGSSTRGGSLLAGGGGFGGGSLYGGGGSRTISASSARFVSSGSAGGYGGGFGGGAGSGYGGGFGGGFGGGFGSGFGDFGGGDGGLLSGNEKITMQNLNDRLASYLEKVRALEEANADLEVKIRDWYQRQSPTSPERDYSPYFKTTDELRDKILAAAIDNSRVILEIDNARLAADDFRLKYENEMALRQSVEADINGLRRVLDELTLTKTDLEMQIESLNEELAYLKKNHEEEMKEFSNQLAGQVNVEMDAAPGVDLTRVLSEMREQYEAMAEKNRRDAEAWFFSKTEELNKEVASNTEMIQTSKSEITDLRRTIQGLEIELQSQLSMKAGLESTLAETDGRYAAQLQQIQGLISSIEAQLSELRSEMEAQNQEYKMLLDIKTRLEQEIATYHSLLEGQDARMAGIGTGEASLGGGGGGKVRINVEESVDGKVVSSRKREI.

Residues 1–102 (MATTLLQTSS…GGDGGLLSGN (102 aa)) form a head region. A phosphoserine mark is found at S16, S17, S34, S48, and S56. The segment at 103–138 (EKITMQNLNDRLASYLEKVRALEEANADLEVKIRDW) is coil 1A. The IF rod domain occupies 103–415 (EKITMQNLND…SLLEGQDARM (313 aa)). The linker 1 stretch occupies residues 139–157 (YQRQSPTSPERDYSPYFKT). A coil 1B region spans residues 158–249 (TDELRDKILA…KNHEEEMKEF (92 aa)). The linker 12 stretch occupies residues 250 to 269 (SNQLAGQVNVEMDAAPGVDL). Residues 270-411 (TRVLSEMREQ…ATYHSLLEGQ (142 aa)) are coil 2. K298 participates in a covalent cross-link: Glycyl lysine isopeptide (Lys-Gly) (interchain with G-Cter in SUMO2). Phosphothreonine occurs at positions 299 and 321. The segment at 412–453 (DARMAGIGTGEASLGGGGGGKVRINVEESVDGKVVSSRKREI) is tail. K444 is covalently cross-linked (Glycyl lysine isopeptide (Lys-Gly) (interchain with G-Cter in SUMO1); alternate). K444 is covalently cross-linked (Glycyl lysine isopeptide (Lys-Gly) (interchain with G-Cter in SUMO2); alternate).

Belongs to the intermediate filament family. In terms of assembly, heterotetramer of two type I and two type II keratins. Interacts with NOD2. Expressed in the basal cell layers of several stratified epithelia including esophagus, tongue, stomach, epidermis and hair follicle. In the hair follicle, expression is detected mainly in the basal layer of the outer root sheath (ORS), except just above the follicle bulb where it occurs throughout its thickness. Low expression levels are seen in the single layer of ORS cells around the base of the follicle which increases in the palisade-like cells of the bulb. Also expressed in the basal cells of the sebaceous glands, and expression in the epidermis occurs in a punctate pattern.

In Ovis aries (Sheep), this protein is Keratin, type I cytoskeletal 15.